The primary structure comprises 521 residues: Vang-like protein 2 (521 aa).

Residues 1–81 (MDTESQYSGY…TTVVTGTSEH (81 aa)) form a disordered region. The Cytoplasmic segment spans residues 1–108 (MDTESQYSGY…VPLDCSRHLG (108 aa)). A compositionally biased stretch (basic residues) spans 15 to 33 (GHSRSSRKHRDRRDRHRSK). A compositionally biased stretch (basic and acidic residues) spans 57-67 (ESTRGDERDDN). Over residues 69 to 81 (GETTTVVTGTSEH) the composition is skewed to low complexity. A helical transmembrane segment spans residues 109 to 129 (VAAGATLALLSFLTPLAFLLL). The Extracellular portion of the chain corresponds to 130 to 147 (PPLLWREELEPCGTACEG). Residues 148 to 168 (LFISVAFKLLILLLGSWALFF) form a helical membrane-spanning segment. Over 169-178 (RRPKASLPRV) the chain is Cytoplasmic. Residues 179-199 (FVLRALLMVLVFLLVVSYWLF) form a helical membrane-spanning segment. Residues 200-217 (YGVRILDARERSYQGVVQ) are Extracellular-facing. Residues 218-238 (FAVSLVDALLFVHYLAVVLLE) traverse the membrane as a helical segment. Over 239-521 (LRQLQPQFTL…VMRLQSETSV (283 aa)) the chain is Cytoplasmic.

The protein belongs to the Vang family. Homodimer and heterodimer with VANGL1. Interacts through its C-terminal region with the N-terminal half of DVL1, DVL2 and DVL3. The PDZ domain of DVL1, DVL2 and DVL3 is required for the interaction. Also interacts with the PDZ domains of MAGI3, SCRIB/SCRB1 and FZD3. Interacts with PRICKLE3.

Its subcellular location is the cell membrane. In terms of biological role, involved in the control of early morphogenesis and patterning of both axial midline structures and the development of neural plate. Plays a role in the regulation of planar cell polarity, particularly in the orientation of stereociliary bundles in the cochlea. Required for polarization and movement of myocardializing cells in the outflow tract and seems to act via RHOA signaling to regulate this process. Required for cell surface localization of FZD3 and FZD6 in the inner ear. In Homo sapiens (Human), this protein is Vang-like protein 2 (VANGL2).